Reading from the N-terminus, the 384-residue chain is Transcription factor TGA3 (384 aa).

2 disordered regions span residues 36–70 and 76–95; these read KSDI…NNRV and YNNS…EDRI. Positions 39 to 55 are enriched in low complexity; it reads INNITSNQNNNQSSSTT. Positions 58-68 are enriched in basic and acidic residues; it reads VDARPEADDNN. A compositionally biased stretch (polar residues) spans 76–88; that stretch reads YNNSLEAEPSSNN. The bZIP domain occupies 96–138; that stretch reads NDKMKRRLAQNREAARKSRLRKKAHVQQLEESRLKLSQLEQEL. Positions 98-118 are basic motif; that stretch reads KMKRRLAQNREAARKSRLRKK. Positions 99-106 match the Nuclear localization signal motif; the sequence is MKRRLAQN. Residues 117-144 are a coiled coil; the sequence is KKAHVQQLEESRLKLSQLEQELVRARQQ. The tract at residues 124–138 is leucine-zipper; the sequence is LEESRLKLSQLEQEL. The DOG1 domain occupies 167-379; sequence IAAFEMEYTH…RALSSLWAAR (213 aa). Positions 219, 236, and 249 each coordinate hexadecanoate. Residues 267–296 adopt a coiled-coil conformation; that stretch reads DQQLLEVRNLQQSSQQAEEALSQGLDKLQQ.

It belongs to the bZIP family. In terms of assembly, binds DNA as a dimer. Interacts with NPR3, NPR4 and sumoylated NPR1. Interacts with GRXC7/ROXY1. Expressed in the whole plant.

Its subcellular location is the nucleus. In terms of biological role, transcriptional activator that binds specifically to the DNA sequence 5'-TGACG-3'. Recognizes ocs elements like the as-1 motif of the cauliflower mosaic virus 35S promoter. Binding to the as-1-like cis elements mediate auxin- and salicylic acid-inducible transcription. Required to induce the systemic acquired resistance (SAR) via the regulation of pathogenesis-related genes expression. Binding to the as-1 element of PR-1 promoter is salicylic acid-inducible and mediated by sumoylated NPR1. Could also bind to the Hex-motif (5'-TGACGTGG-3') another cis-acting element found in plant histone promoters. The protein is Transcription factor TGA3 of Arabidopsis thaliana (Mouse-ear cress).